Reading from the N-terminus, the 640-residue chain is Serine/threonine-protein kinase WNG1 (640 aa).

The signal sequence occupies residues 1–70 (MPEQDLASGF…GVLCTVEAGA (70 aa)). Disordered regions lie at residues 100–222 (PEVT…AQPT) and 237–280 (SHPD…DASN). Residues 104-120 (HASSEGSPQFESSLSQQ) are compositionally biased toward polar residues. Positions 124–141 (RPADRGEAHNGEEPRKDA) are enriched in basic and acidic residues. The span at 175 to 186 (QRQASSAAESLA) shows a compositional bias: low complexity. Residues 248 to 279 (FSKKQEGRRERRLAVRGDDSFARGHNRDRDAS) show a composition bias toward basic and acidic residues. The Protein kinase domain occupies 291–593 (WAKIAALATG…LKQVMEDPYF (303 aa)). Position 395 (Lys-395) interacts with ATP. Catalysis depends on Asp-486, which acts as the Proton acceptor. A disordered region spans residues 609–640 (PFRGDFSIDDPDAGGKMYIPPSKEQDHEQENE). Basic and acidic residues predominate over residues 631–640 (KEQDHEQENE).

This sequence belongs to the protein kinase superfamily. STE Ser/Thr protein kinase family. WNG subfamily. Mg(2+) is required as a cofactor.

The protein resides in the cytoplasmic granule. It localises to the secreted. Its subcellular location is the parasitophorous vacuole lumen. The enzyme catalyses L-seryl-[protein] + ATP = O-phospho-L-seryl-[protein] + ADP + H(+). It carries out the reaction L-threonyl-[protein] + ATP = O-phospho-L-threonyl-[protein] + ADP + H(+). Functionally, serine/threonine-protein kinase which, at the tachyzoite stage, phosphorylates several parasitophorous vacuole (PV)-resident proteins such as GRA2, GRA6 and GRA7. By phosphorylating GRA2 and GRA6, regulates the formation of a functional intravacuolar network (IVN); IVN is composed of membranous tubules that bud from the PV membrane into the vacuolar lumen. Plays a role in the establishement of chronic infection in the host by controlling cyst formation in the host tissues. This chain is Serine/threonine-protein kinase WNG1, found in Toxoplasma gondii.